An 844-amino-acid chain; its full sequence is Beta-mannosidase B (844 aa).

The active-site Proton donor is the glutamate 432.

It belongs to the glycosyl hydrolase 2 family. Beta-mannosidase B subfamily.

The catalysed reaction is Hydrolysis of terminal, non-reducing beta-D-mannose residues in beta-D-mannosides.. It participates in glycan metabolism; N-glycan degradation. Functionally, exoglycosidase that cleaves the single beta-linked mannose residue from the non-reducing end of beta-mannosidic oligosaccharides of various complexity and length. Prefers mannobiose over mannotriose and has no activity against polymeric mannan. Is also severely restricted by galactosyl substitutions at the +1 subsite. The protein is Beta-mannosidase B (mndB) of Aspergillus oryzae (strain ATCC 42149 / RIB 40) (Yellow koji mold).